The primary structure comprises 173 residues: HTH-type transcriptional regulator IscR (173 aa).

The 130-residue stretch at 2–131 (KLTSKGRYAV…NDITLGELMK (130 aa)) folds into the HTH rrf2-type domain. Residues 28-51 (LADISERQGISLSYLEQLFSKLRK) constitute a DNA-binding region (H-T-H motif). [2Fe-2S] cluster-binding residues include Cys-92, Cys-98, and Cys-104.

Requires [2Fe-2S] cluster as cofactor.

Its function is as follows. Regulates the transcription of several operons and genes involved in the biogenesis of Fe-S clusters and Fe-S-containing proteins. The chain is HTH-type transcriptional regulator IscR from Vibrio atlanticus (strain LGP32) (Vibrio splendidus (strain Mel32)).